The following is a 104-amino-acid chain: Probable RNA-binding protein PA4753 (104 aa).

The CRM domain occupies 1 to 97 (MALTQEQKKQ…NPKPNKNLSN (97 aa)).

The sequence is that of Probable RNA-binding protein PA4753 from Pseudomonas aeruginosa (strain ATCC 15692 / DSM 22644 / CIP 104116 / JCM 14847 / LMG 12228 / 1C / PRS 101 / PAO1).